The chain runs to 336 residues: Holliday junction branch migration complex subunit RuvB (336 aa).

A large ATPase domain (RuvB-L) region spans residues 1–180 (MRRTGIRLSW…FGIVEHLEYY (180 aa)). Residues Leu18, Arg19, Gly60, Lys63, Thr64, Thr65, 127–129 (EDF), Arg170, Tyr180, and Arg217 contribute to the ATP site. Thr64 is a binding site for Mg(2+). Positions 181–251 (TPEELAQGVM…RALEALAALG (71 aa)) are small ATPAse domain (RuvB-S). Positions 254 to 336 (ELGLEKRDRE…PPPVGPLLEP (83 aa)) are head domain (RuvB-H). DNA-binding residues include Arg309 and Arg314.

This sequence belongs to the RuvB family. Homohexamer. Forms an RuvA(8)-RuvB(12)-Holliday junction (HJ) complex. HJ DNA is sandwiched between 2 RuvA tetramers; dsDNA enters through RuvA and exits via RuvB. An RuvB hexamer assembles on each DNA strand where it exits the tetramer. Each RuvB hexamer is contacted by two RuvA subunits (via domain III) on 2 adjacent RuvB subunits; this complex drives branch migration. In the full resolvosome a probable DNA-RuvA(4)-RuvB(12)-RuvC(2) complex forms which resolves the HJ.

The protein localises to the cytoplasm. It carries out the reaction ATP + H2O = ADP + phosphate + H(+). The RuvA-RuvB-RuvC complex processes Holliday junction (HJ) DNA during genetic recombination and DNA repair, while the RuvA-RuvB complex plays an important role in the rescue of blocked DNA replication forks via replication fork reversal (RFR). RuvA specifically binds to HJ cruciform DNA, conferring on it an open structure. The RuvB hexamer acts as an ATP-dependent pump, pulling dsDNA into and through the RuvAB complex. RuvB forms 2 homohexamers on either side of HJ DNA bound by 1 or 2 RuvA tetramers; 4 subunits per hexamer contact DNA at a time. Coordinated motions by a converter formed by DNA-disengaged RuvB subunits stimulates ATP hydrolysis and nucleotide exchange. Immobilization of the converter enables RuvB to convert the ATP-contained energy into a lever motion, pulling 2 nucleotides of DNA out of the RuvA tetramer per ATP hydrolyzed, thus driving DNA branch migration. The RuvB motors rotate together with the DNA substrate, which together with the progressing nucleotide cycle form the mechanistic basis for DNA recombination by continuous HJ branch migration. Branch migration allows RuvC to scan DNA until it finds its consensus sequence, where it cleaves and resolves cruciform DNA. This chain is Holliday junction branch migration complex subunit RuvB, found in Thermus thermophilus (strain ATCC BAA-163 / DSM 7039 / HB27).